A 338-amino-acid polypeptide reads, in one-letter code: Lipoyl synthase (338 aa).

Residues 1-22 (MTTVQEAVPNLIPTQDVTPRPA) form a disordered region. [4Fe-4S] cluster is bound by residues cysteine 84, cysteine 89, cysteine 95, cysteine 110, cysteine 114, cysteine 117, and serine 324. Positions 96-313 (FSGGTATFMI…AEEGYKMGFK (218 aa)) constitute a Radical SAM core domain.

This sequence belongs to the radical SAM superfamily. Lipoyl synthase family. It depends on [4Fe-4S] cluster as a cofactor.

The protein resides in the cytoplasm. It catalyses the reaction [[Fe-S] cluster scaffold protein carrying a second [4Fe-4S](2+) cluster] + N(6)-octanoyl-L-lysyl-[protein] + 2 oxidized [2Fe-2S]-[ferredoxin] + 2 S-adenosyl-L-methionine + 4 H(+) = [[Fe-S] cluster scaffold protein] + N(6)-[(R)-dihydrolipoyl]-L-lysyl-[protein] + 4 Fe(3+) + 2 hydrogen sulfide + 2 5'-deoxyadenosine + 2 L-methionine + 2 reduced [2Fe-2S]-[ferredoxin]. The protein operates within protein modification; protein lipoylation via endogenous pathway; protein N(6)-(lipoyl)lysine from octanoyl-[acyl-carrier-protein]: step 2/2. Functionally, catalyzes the radical-mediated insertion of two sulfur atoms into the C-6 and C-8 positions of the octanoyl moiety bound to the lipoyl domains of lipoate-dependent enzymes, thereby converting the octanoylated domains into lipoylated derivatives. The sequence is that of Lipoyl synthase from Pseudomonas entomophila (strain L48).